The chain runs to 353 residues: UPF0283 membrane protein YcjF (353 aa).

The next 3 membrane-spanning stretches (helical) occupy residues 70 to 90 (MVMGGLALFGASVVGQGIQWT), 100 to 120 (VALGGCAAGALIIGAGVGSVV), and 213 to 233 (ESTLMIAVSPLALVDMAFIAW).

Belongs to the UPF0283 family.

Its subcellular location is the cell inner membrane. This Shigella flexneri serotype 5b (strain 8401) protein is UPF0283 membrane protein YcjF.